Here is a 442-residue protein sequence, read N- to C-terminus: MSRINKFVLTVSLLIFIMISAVACGIYTQMVKERVYSLKQSVIDTAFAVANIAEYRRSVAIDLINTLNPTEEQLLVGLRTAYADSVSPSYLYDVGPYLISSDECIQVKEFEKNYCADIMQVVKYRHVKNTGFISFDGKTFVYYLYPVTHNRSLIFLLGLERFSLLSKSLAMDSENLMFSLFKNGKPVTGDEYNAKNAIFTVSEAMEHFAYLPTGLYVFAYKKDVYLRVCTLIIFFAALVAVISGASCLYLVRRVINRGIVEKEAIINNHFERVLDGGLFFSAADVKKLYSMYNSAFLDDLTKAMGRKSFDEDLKALPEKGGYLCLFDVDKFKNINDTFGHLLGDEVLMKVVKILKSQIPVDKGKVYRFGGDEFAVIYTGGTLEELLSILKEIVHFQVGSINLSTSIGVAHSNECPTVERLKMLADERLYKSKKNGRAQISWQ.

The signal sequence occupies residues 1-23 (MSRINKFVLTVSLLIFIMISAVA). The N-palmitoyl cysteine moiety is linked to residue Cys24. Cys24 carries the S-diacylglycerol cysteine lipid modification. The chain crosses the membrane as a helical span at residues 231–251 (LIIFFAALVAVISGASCLYLV). One can recognise a GGDEF domain in the interval 319–442 (KGGYLCLFDV…KNGRAQISWQ (124 aa)). Mg(2+) is bound at residue Asp327. Substrate contacts are provided by Asn335, His340, and Asp344. Mg(2+) is bound at residue Asp371.

As to quaternary structure, homodimer. The cofactor is Mg(2+).

It localises to the cell membrane. The enzyme catalyses 2 GTP = 3',3'-c-di-GMP + 2 diphosphate. The protein operates within purine metabolism; 3',5'-cyclic di-GMP biosynthesis. Its function is as follows. Catalyzes the synthesis of cyclic-di-GMP (c-di-GMP) via the condensation of 2 GTP molecules. The chain is Probable diguanylate cyclase DgcI from Escherichia coli (strain K12).